A 732-amino-acid polypeptide reads, in one-letter code: Sesterbrasiliatriene synthase PbSS (732 aa).

A terpene cyclase region spans residues 1 to 342 (MDFLSGAFHY…SRYHRDDLIT (342 aa)). Residues Asp-105 and Asp-109 each contribute to the Mg(2+) site. Residues Asp-105, Asp-109, 193–196 (RLSE), 242–246 (FNKEF), and 334–335 (RY) each bind substrate. A DDXXD 1 motif is present at residues 105-109 (DDVTD). An NSE/DTE motif is present at residues 238 to 246 (DYYSFNKEF). Residues 343–732 (TAGDRAMIVG…ARILLLGLGL (390 aa)) are prenyltransferase. 2 disordered regions span residues 371-390 (KSAT…WSDS) and 398-420 (ACYT…HKAN). Basic and acidic residues predominate over residues 411 to 420 (NGTEAGHKAN). 3 residues coordinate isopentenyl diphosphate: Lys-453, Arg-456, and His-485. Asp-492 and Asp-496 together coordinate Mg(2+). The DDXXD 2 motif lies at 492–496 (DDIED). A dimethylallyl diphosphate-binding site is contributed by Arg-501. An isopentenyl diphosphate-binding site is contributed by Arg-502. Residues Lys-579, Thr-580, Gln-615, Asn-622, Lys-632, and Lys-642 each contribute to the dimethylallyl diphosphate site.

The protein in the N-terminal section; belongs to the terpene synthase family. It in the C-terminal section; belongs to the FPP/GGPP synthase family. Hexamer. It depends on Mg(2+) as a cofactor.

The enzyme catalyses isopentenyl diphosphate + (2E,6E)-farnesyl diphosphate = (2E,6E,10E)-geranylgeranyl diphosphate + diphosphate. The catalysed reaction is isopentenyl diphosphate + (2E,6E,10E)-geranylgeranyl diphosphate = (2E,6E,10E,14E)-geranylfarnesyl diphosphate + diphosphate. It participates in secondary metabolite biosynthesis; terpenoid biosynthesis. Its function is as follows. Bifunctional sesterterpene synthase that possesses both prenyl transferase and terpene cyclase activity, converting isopentenyl diphosphate and dimethylallyl diphosphate into geranylfarnesyl diphosphate (GFPP) and further converting GFPP into sesterbrasiliatriene. This chain is Sesterbrasiliatriene synthase PbSS (PbSS), found in Penicillium brasilianum.